We begin with the raw amino-acid sequence, 1436 residues long: Probable deoxyribonuclease RhsB (1436 aa).

Residues 16–42 are disordered; sequence HAGNRPNPPADRPQPCQGKPPTSPGKT. The next 2 membrane-spanning stretches (helical) occupy residues 48–68 and 70–90; these read FLGA…VAAA and VFLV…LAVF. YD repeat units follow at residues 486 to 521, 569 to 605, 612 to 647, 766 to 799, and 847 to 879; these read YNTA…CADG, YDEV…DGSG, YDDA…GPDA, DLLT…PDGS, and YDAR…VSSA.

Belongs to the RHS/WapA nuclease family.

The protein localises to the membrane. Its function is as follows. Toxic component of a toxin-immunity protein module, which functions as a cellular contact-dependent growth inhibition (CDI) system. This protein may be a nuclease that is specifically inhibited by its cognate immunity protein RhsBI. Upon expression of the C-terminus (residues 1284-1436) in E.coli growth is inhibited, cells elongate, nucleoids condense and plasmid DNA is degraded; these effects are blocked specifically by cognate immunity protein RshIB. Cell contact is necessary for growth inhibition. The polypeptide is Probable deoxyribonuclease RhsB (rhsB) (Dickeya dadantii (strain 3937) (Erwinia chrysanthemi (strain 3937))).